Consider the following 37-residue polypeptide: Large ribosomal subunit protein bL36 (37 aa).

Belongs to the bacterial ribosomal protein bL36 family.

The polypeptide is Large ribosomal subunit protein bL36 (Helicobacter pylori (strain ATCC 700392 / 26695) (Campylobacter pylori)).